The following is a 524-amino-acid chain: Bifunctional purine biosynthesis protein PurH (524 aa).

In terms of domain architecture, MGS-like spans 1–149; the sequence is MSDPLIKRAL…KNNESVTVLT (149 aa).

Belongs to the PurH family.

The catalysed reaction is (6R)-10-formyltetrahydrofolate + 5-amino-1-(5-phospho-beta-D-ribosyl)imidazole-4-carboxamide = 5-formamido-1-(5-phospho-D-ribosyl)imidazole-4-carboxamide + (6S)-5,6,7,8-tetrahydrofolate. It carries out the reaction IMP + H2O = 5-formamido-1-(5-phospho-D-ribosyl)imidazole-4-carboxamide. Its pathway is purine metabolism; IMP biosynthesis via de novo pathway; 5-formamido-1-(5-phospho-D-ribosyl)imidazole-4-carboxamide from 5-amino-1-(5-phospho-D-ribosyl)imidazole-4-carboxamide (10-formyl THF route): step 1/1. It participates in purine metabolism; IMP biosynthesis via de novo pathway; IMP from 5-formamido-1-(5-phospho-D-ribosyl)imidazole-4-carboxamide: step 1/1. The polypeptide is Bifunctional purine biosynthesis protein PurH (Chlorobium luteolum (strain DSM 273 / BCRC 81028 / 2530) (Pelodictyon luteolum)).